We begin with the raw amino-acid sequence, 212 residues long: Probable 2-dehydro-3-deoxy-6-phosphogalactonate aldolase (212 aa).

Arg18 serves as a coordination point for 2-dehydro-3-deoxy-6-phospho-D-galactonate. Glu41 functions as the Proton donor/acceptor in the catalytic mechanism. 2-dehydro-3-deoxy-6-phospho-D-galactonate contacts are provided by Thr70, Lys130, Gly160, Gly180, and Ser181. Residue Lys130 is the Schiff-base intermediate with substrate of the active site.

The protein belongs to the KHG/KDPG aldolase family. Homotrimer.

It carries out the reaction 2-dehydro-3-deoxy-6-phospho-D-galactonate = D-glyceraldehyde 3-phosphate + pyruvate. It participates in carbohydrate acid metabolism; D-galactonate degradation; D-glyceraldehyde 3-phosphate and pyruvate from D-galactonate: step 3/3. In terms of biological role, involved in the degradation of galactose via the DeLey-Doudoroff pathway. Catalyzes the reversible, stereospecific retro-aldol cleavage of 2-keto-3-deoxy-6-phosphogalactonate (KDPGal) to pyruvate and D-glyceraldehyde-3-phosphate. The sequence is that of Probable 2-dehydro-3-deoxy-6-phosphogalactonate aldolase (dgoA) from Rhizobium meliloti (strain 1021) (Ensifer meliloti).